The following is a 429-amino-acid chain: Probable M18 family aminopeptidase 2 (429 aa).

Positions 82, 156, and 401 each coordinate Zn(2+).

Belongs to the peptidase M18 family. Zn(2+) serves as cofactor.

This is Probable M18 family aminopeptidase 2 from Pseudomonas putida (strain ATCC 47054 / DSM 6125 / CFBP 8728 / NCIMB 11950 / KT2440).